Reading from the N-terminus, the 31-residue chain is Photosystem II reaction center protein T (31 aa).

A helical membrane pass occupies residues 3–23 (SLVYIFVFVVALGVLFFAIAF).

This sequence belongs to the PsbT family. As to quaternary structure, PSII is composed of 1 copy each of membrane proteins PsbA, PsbB, PsbC, PsbD, PsbE, PsbF, PsbH, PsbI, PsbJ, PsbK, PsbL, PsbM, PsbT, PsbX, PsbY, PsbZ, Psb30/Ycf12, peripheral proteins PsbO, CyanoQ (PsbQ), PsbU, PsbV and a large number of cofactors. It forms dimeric complexes.

It localises to the cellular thylakoid membrane. Its function is as follows. Found at the monomer-monomer interface of the photosystem II (PS II) dimer, plays a role in assembly and dimerization of PSII. PSII is a light-driven water plastoquinone oxidoreductase, using light energy to abstract electrons from H(2)O, generating a proton gradient subsequently used for ATP formation. The sequence is that of Photosystem II reaction center protein T from Synechococcus elongatus (strain ATCC 33912 / PCC 7942 / FACHB-805) (Anacystis nidulans R2).